Here is a 445-residue protein sequence, read N- to C-terminus: Methionine aminopeptidase 2-1 (445 aa).

The disordered stretch occupies residues 1–99 (MAAQVPTEAL…FPNKAYPKGE (99 aa)). Residues 61–75 (KKKKKRKPKKKKKHP) show a composition bias toward basic residues. H198 is a binding site for substrate. Residues D218, D229, and H298 each contribute to the a divalent metal cation site. Residue H306 coordinates substrate. 2 residues coordinate a divalent metal cation: E331 and E426.

This sequence belongs to the peptidase M24A family. Methionine aminopeptidase eukaryotic type 2 subfamily. Co(2+) is required as a cofactor. Requires Zn(2+) as cofactor. Mn(2+) serves as cofactor. The cofactor is Fe(2+).

It localises to the cytoplasm. It carries out the reaction Release of N-terminal amino acids, preferentially methionine, from peptides and arylamides.. Functionally, cotranslationally removes the N-terminal methionine from nascent proteins. The N-terminal methionine is often cleaved when the second residue in the primary sequence is small and uncharged (Met-Ala-, Cys, Gly, Pro, Ser, Thr, or Val). The polypeptide is Methionine aminopeptidase 2-1 (Fusarium vanettenii (strain ATCC MYA-4622 / CBS 123669 / FGSC 9596 / NRRL 45880 / 77-13-4) (Fusarium solani subsp. pisi)).